Consider the following 286-residue polypeptide: 4-hydroxybenzoate octaprenyltransferase (286 aa).

A run of 7 helical transmembrane segments spans residues 20–40 (IGTLLLLWPCLMALLLAAGGM), 43–63 (LKVLTIFIFGVVVMRACGCII), 95–115 (ILFAVMGLFAFGLVLMLNPLV), 142–162 (FLGVVWSWSIPMAYAAQTGEV), 167–187 (WWLFAANWCWTVAYDTMYAMV), 210–230 (QIIGLFQLAALACFITAGWAA), and 234–254 (LVYGLGIITFVGFSMYQQKLI).

This sequence belongs to the UbiA prenyltransferase family. Mg(2+) is required as a cofactor.

It localises to the cell inner membrane. It carries out the reaction all-trans-octaprenyl diphosphate + 4-hydroxybenzoate = 4-hydroxy-3-(all-trans-octaprenyl)benzoate + diphosphate. The protein operates within cofactor biosynthesis; ubiquinone biosynthesis. Catalyzes the prenylation of para-hydroxybenzoate (PHB) with an all-trans polyprenyl group. Mediates the second step in the final reaction sequence of ubiquinone-8 (UQ-8) biosynthesis, which is the condensation of the polyisoprenoid side chain with PHB, generating the first membrane-bound Q intermediate 3-octaprenyl-4-hydroxybenzoate. In Shewanella sediminis (strain HAW-EB3), this protein is 4-hydroxybenzoate octaprenyltransferase.